We begin with the raw amino-acid sequence, 264 residues long: 5'-nucleotidase SurE (264 aa).

Residues D8, D9, S39, and N95 each contribute to the a divalent metal cation site.

This sequence belongs to the SurE nucleotidase family. A divalent metal cation is required as a cofactor.

Its subcellular location is the cytoplasm. The catalysed reaction is a ribonucleoside 5'-phosphate + H2O = a ribonucleoside + phosphate. Nucleotidase that shows phosphatase activity on nucleoside 5'-monophosphates. The sequence is that of 5'-nucleotidase SurE from Syntrophomonas wolfei subsp. wolfei (strain DSM 2245B / Goettingen).